Reading from the N-terminus, the 93-residue chain is Parbolysin P2 (93 aa).

Disulfide bonds link Cys-16/Cys-37 and Cys-22/Cys-33.

It belongs to the worm cytolysin family. Localized within the skin and proboscis and are most readily isolated from body mucus secretions.

Its subcellular location is the secreted. In terms of biological role, cytolysin that shows hemolytic activity (on bovine erythrocytes, HC(50)=5.75 mg/ml). This hemolytic activity is completely inhibited by small unilamelar vesicles composed of PC/PG, PC/PI and PC/PS in 1:1 molar ratios (with at least 100 mg/ml concentration). The polypeptide is Parbolysin P2 (Parborlasia corrugatus (Antarctic nemertean worm)).